Reading from the N-terminus, the 457-residue chain is Argininosuccinate lyase (457 aa).

The protein belongs to the lyase 1 family. Argininosuccinate lyase subfamily.

The protein localises to the cytoplasm. It catalyses the reaction 2-(N(omega)-L-arginino)succinate = fumarate + L-arginine. It functions in the pathway amino-acid biosynthesis; L-arginine biosynthesis; L-arginine from L-ornithine and carbamoyl phosphate: step 3/3. This chain is Argininosuccinate lyase, found in Serratia proteamaculans (strain 568).